Reading from the N-terminus, the 413-residue chain is Aspartate aminotransferase, cytoplasmic (413 aa).

Residues Gly-39 and Trp-141 each coordinate L-aspartate. Ser-149 carries the post-translational modification Phosphoserine. Asn-195 lines the L-aspartate pocket. Lys-259 bears the N6-(pyridoxal phosphate)lysine mark. Arg-387 is a binding site for L-aspartate.

The protein belongs to the class-I pyridoxal-phosphate-dependent aminotransferase family. As to quaternary structure, homodimer. It depends on pyridoxal 5'-phosphate as a cofactor.

Its subcellular location is the cytoplasm. It carries out the reaction L-aspartate + 2-oxoglutarate = oxaloacetate + L-glutamate. The enzyme catalyses L-cysteine + 2-oxoglutarate = 2-oxo-3-sulfanylpropanoate + L-glutamate. It catalyses the reaction (2S)-2-aminobutanoate + 2-oxoglutarate = 2-oxobutanoate + L-glutamate. The catalysed reaction is 3-sulfino-L-alanine + 2-oxoglutarate = 3-sulfinopyruvate + L-glutamate. In terms of biological role, biosynthesis of L-glutamate from L-aspartate or L-cysteine. Important regulator of levels of glutamate, the major excitatory neurotransmitter of the vertebrate central nervous system. Acts as a scavenger of glutamate in brain neuroprotection. The aspartate aminotransferase activity is involved in hepatic glucose synthesis during development and in adipocyte glyceroneogenesis. Using L-cysteine as substrate, regulates levels of mercaptopyruvate, an important source of hydrogen sulfide. Mercaptopyruvate is converted into H(2)S via the action of 3-mercaptopyruvate sulfurtransferase (3MST). Hydrogen sulfide is an important synaptic modulator and neuroprotectant in the brain. The protein is Aspartate aminotransferase, cytoplasmic of Pan troglodytes (Chimpanzee).